The following is a 103-amino-acid chain: uncharacterized protein (103 aa).

The chain crosses the membrane as a helical span at residues 37-57; that stretch reads FILLSSLLIGGLLITIACYHI.

It is found in the membrane. This is an uncharacterized protein from Saccharomyces cerevisiae (strain ATCC 204508 / S288c) (Baker's yeast).